The sequence spans 569 residues: MRDNTSPISVILVSSGSRGNKLLFRYPFQRSQEHPASQTSKPRSRYAASNTGDHADEQDGDSRFSDVILATILATKSEMCGQKFELKIDNVRFVGHPTLLQHALGQISKTDPSPKREAPTMILFNVVFALRANADPSVINCLHNLSRRIATVLQHEERRCQYLTREAKLILALQDEVSAMADGNEGPQSPFHHILPKCKLARDLKEAYDSLCTSGVVRLHINSWLEVSFCLPHKIHYAASSLIPPEAIERSLKAIRPYHALLLLSDEKSLLGELPIDCSPALVRVIKTTSAVKNLQQLAQDADLALLQVFQLAAHLVYWGKAIIIYPLCENNVYMLSPNASVCLYSPLAEQFSHQFPSHDLPSVLAKFSLPVSLSEFRNPLAPAVQETQLIQMVVWMLQRRLLIQLHTYVCLMASPSEEEPRPREDDVPFTARVGGRSLSTPNALSFGSPTSSDDMTLTSPSMDNSSAELLPSGDSPLNQRMTENLLASLSEHERAAILSVPAAQNPEDLRMFARLLHYFRGRHHLEEIMYNENTRRSQLLMLFDKFRSVLVVTTHEDPVIAVFQALLP.

Disordered stretches follow at residues 27 to 60 and 416 to 477; these read PFQR…EQDG and PSEE…GDSP. Polar residues-rich tracts occupy residues 34–52 and 438–468; these read HPAS…SNTG and SLST…NSSA. Phosphoserine is present on Ser476.

Belongs to the NPR3 family. As to quaternary structure, within the GATOR complex, component of the GATOR1 subcomplex, made of DEPDC5, NPRL2 and NPRL3. GATOR1 mediates the strong interaction of the GATOR complex with small GTPases Rag (RagA/RRAGA, RagB/RRAGB, RagC/RRAGC and/or RagD/RRAGD) heterodimers. GATOR1 interacts with GPR155/LYCHOS; interaction takes place in presence of cholesterol and prevents interaction between GATOR1 and KICSTOR. As to expression, widely expressed. Expressed in the frontal lobe cortex as well as in the temporal, parietal, and occipital lobes.

The protein localises to the lysosome membrane. In terms of biological role, as a component of the GATOR1 complex functions as an inhibitor of the amino acid-sensing branch of the mTORC1 pathway. In response to amino acid depletion, the GATOR1 complex has GTPase activating protein (GAP) activity and strongly increases GTP hydrolysis by RagA/RRAGA (or RagB/RRAGB) within heterodimeric Rag complexes, thereby turning them into their inactive GDP-bound form, releasing mTORC1 from lysosomal surface and inhibiting mTORC1 signaling. In the presence of abundant amino acids, the GATOR1 complex is negatively regulated by GATOR2, the other GATOR subcomplex, in this amino acid-sensing branch of the TORC1 pathway. This is GATOR1 complex protein NPRL3 from Homo sapiens (Human).